A 394-amino-acid polypeptide reads, in one-letter code: p-hydroxybenzoate hydroxylase (394 aa).

FAD-binding positions include Ser-13, Glu-32, 42–47 (RIRAGV), and Gln-102. Substrate is bound by residues Tyr-201, 212–214 (SQR), and Tyr-222. Asp-286 serves as a coordination point for FAD. Pro-293 serves as a coordination point for substrate. Residue 299-300 (LN) coordinates FAD.

Belongs to the aromatic-ring hydroxylase family. In terms of assembly, homodimer. FAD is required as a cofactor.

It carries out the reaction 4-hydroxybenzoate + NADPH + O2 + H(+) = 3,4-dihydroxybenzoate + NADP(+) + H2O. It participates in aromatic compound metabolism; benzoate degradation via hydroxylation; 3,4-dihydroxybenzoate from benzoate: step 2/2. Catalyzes the incorporation of an atom of dioxygen into p-hydroxybenzoate (p-OHB) to form 3,4-dihydroxybenzoate (3,4DOHB). The reaction occurs in two parts: reduction of the flavin adenine dinucleotide (FAD) in the enzyme by reduced nicotinamide adenine dinucleotide phosphate (NADPH) in response to binding p-hydroxybenzoate to the enzyme and oxidation of reduced FAD with oxygen to form a hydroperoxide, which then oxygenates p-hydroxybenzoate. The sequence is that of p-hydroxybenzoate hydroxylase from Pseudomonas aeruginosa (strain ATCC 15692 / DSM 22644 / CIP 104116 / JCM 14847 / LMG 12228 / 1C / PRS 101 / PAO1).